The primary structure comprises 1135 residues: DNA-directed RNA polymerase subunit beta' (1135 aa).

Residues Cys60, Cys62, Cys75, and Cys78 each contribute to the Zn(2+) site. Mg(2+)-binding residues include Asp450, Asp452, and Asp454. Zn(2+) is bound by residues Cys795, Cys869, Cys876, and Cys879.

It belongs to the RNA polymerase beta' chain family. As to quaternary structure, the RNAP catalytic core consists of 2 alpha, 1 beta, 1 beta' and 1 omega subunit. When a sigma factor is associated with the core the holoenzyme is formed, which can initiate transcription. Requires Mg(2+) as cofactor. Zn(2+) serves as cofactor.

The enzyme catalyses RNA(n) + a ribonucleoside 5'-triphosphate = RNA(n+1) + diphosphate. In terms of biological role, DNA-dependent RNA polymerase catalyzes the transcription of DNA into RNA using the four ribonucleoside triphosphates as substrates. This is DNA-directed RNA polymerase subunit beta' from Clostridium tetani (strain Massachusetts / E88).